A 237-amino-acid polypeptide reads, in one-letter code: Phosphoribosylaminoimidazole-succinocarboxamide synthase (237 aa).

This sequence belongs to the SAICAR synthetase family.

The enzyme catalyses 5-amino-1-(5-phospho-D-ribosyl)imidazole-4-carboxylate + L-aspartate + ATP = (2S)-2-[5-amino-1-(5-phospho-beta-D-ribosyl)imidazole-4-carboxamido]succinate + ADP + phosphate + 2 H(+). The protein operates within purine metabolism; IMP biosynthesis via de novo pathway; 5-amino-1-(5-phospho-D-ribosyl)imidazole-4-carboxamide from 5-amino-1-(5-phospho-D-ribosyl)imidazole-4-carboxylate: step 1/2. This Psychrobacter arcticus (strain DSM 17307 / VKM B-2377 / 273-4) protein is Phosphoribosylaminoimidazole-succinocarboxamide synthase.